A 264-amino-acid polypeptide reads, in one-letter code: Thiazole synthase (264 aa).

Lys-106 acts as the Schiff-base intermediate with DXP in catalysis. Residues Gly-167, 193–194, and 215–216 contribute to the 1-deoxy-D-xylulose 5-phosphate site; these read AG and NS.

It belongs to the ThiG family. As to quaternary structure, homotetramer. Forms heterodimers with either ThiH or ThiS.

The protein resides in the cytoplasm. The enzyme catalyses [ThiS sulfur-carrier protein]-C-terminal-Gly-aminoethanethioate + 2-iminoacetate + 1-deoxy-D-xylulose 5-phosphate = [ThiS sulfur-carrier protein]-C-terminal Gly-Gly + 2-[(2R,5Z)-2-carboxy-4-methylthiazol-5(2H)-ylidene]ethyl phosphate + 2 H2O + H(+). The protein operates within cofactor biosynthesis; thiamine diphosphate biosynthesis. In terms of biological role, catalyzes the rearrangement of 1-deoxy-D-xylulose 5-phosphate (DXP) to produce the thiazole phosphate moiety of thiamine. Sulfur is provided by the thiocarboxylate moiety of the carrier protein ThiS. In vitro, sulfur can be provided by H(2)S. In Pseudomonas savastanoi pv. phaseolicola (strain 1448A / Race 6) (Pseudomonas syringae pv. phaseolicola (strain 1448A / Race 6)), this protein is Thiazole synthase.